The following is a 164-amino-acid chain: MNRAAIYPGSFDPLTNGHLAIIQRGLNLFDRLVVAVANNPQKSPMFTVDERKALIREAVGNDPRVEVDSFDGLMVDYARTRGIPKVLRGLRAVSDFEYEFQLANMNKKLLPEFESVFVMTGEDYFFVSARLVREVAVFGGNVEGLVPPNVLEALQRKLGRPPRT.

Ser-10 lines the substrate pocket. ATP is bound by residues 10–11 and His-18; that span reads SF. Substrate is bound by residues Lys-42, Met-74, and Arg-88. ATP-binding positions include 89–91, Glu-99, and 124–130; these read GLR and YFFVSAR.

The protein belongs to the bacterial CoaD family. In terms of assembly, homohexamer. Requires Mg(2+) as cofactor.

Its subcellular location is the cytoplasm. The catalysed reaction is (R)-4'-phosphopantetheine + ATP + H(+) = 3'-dephospho-CoA + diphosphate. The protein operates within cofactor biosynthesis; coenzyme A biosynthesis; CoA from (R)-pantothenate: step 4/5. In terms of biological role, reversibly transfers an adenylyl group from ATP to 4'-phosphopantetheine, yielding dephospho-CoA (dPCoA) and pyrophosphate. The chain is Phosphopantetheine adenylyltransferase from Anaeromyxobacter dehalogenans (strain 2CP-C).